An 880-amino-acid polypeptide reads, in one-letter code: DNA mismatch repair protein MutS (880 aa).

ATP is bound at residue 635 to 642 (GPNMGGKS).

The protein belongs to the DNA mismatch repair MutS family.

Its function is as follows. This protein is involved in the repair of mismatches in DNA. It is possible that it carries out the mismatch recognition step. This protein has a weak ATPase activity. In Nitrosomonas eutropha (strain DSM 101675 / C91 / Nm57), this protein is DNA mismatch repair protein MutS.